Reading from the N-terminus, the 542-residue chain is Excitatory amino acid transporter 1 (542 aa).

The Cytoplasmic segment spans residues 1-47; it reads MTKSNGEEPKMGGRMERFQQGVRKRTLLAKKKVQNITKEDVKSYLFR. Residues 48–68 traverse the membrane as a helical segment; that stretch reads NAFVLLTVTAVIVGTILGFTL. Topologically, residues 69-86 are extracellular; the sequence is RPYRMSYREVKYFSFPGE. Residues 87–108 form a helical membrane-spanning segment; that stretch reads LLMRMLQMLVLPLIISSLVTGM. The Cytoplasmic portion of the chain corresponds to 109 to 122; the sequence is AALDSKASGKMGMR. A helical transmembrane segment spans residues 123–145; that stretch reads AVVYYMTTTIIAVVIGIIIVIII. Topologically, residues 146–236 are extracellular; the sequence is HPGKGTKENM…ITEELVPVPG (91 aa). A helical membrane pass occupies residues 237 to 260; sequence SVNGVNALGLVVFSMCFGFVIGNM. At 261 to 269 the chain is on the cytoplasmic side; that stretch reads KEQGQALRE. Residues 270 to 297 form a helical membrane-spanning segment; sequence FFDSLNEAIMRLVAVIMWYAPVGILFLI. Topologically, residues 298–318 are extracellular; sequence AGKIVEMEDMGVIGGQLAMYT. The chain crosses the membrane as a helical span at residues 319-340; the sequence is VTVIVGLLIHAVIVLPLLYFLV. Residues 341-345 lie on the Cytoplasmic side of the membrane; that stretch reads TRKNP. The discontinuously helical intramembrane region spans 346-376; sequence WVFIGGLLQALITALGTSSSSATLPITFKCL. 363–365 contacts L-aspartate; the sequence is SSS. Residues 377-385 lie on the Cytoplasmic side of the membrane; it reads EENNGVDKR. The helical transmembrane segment at 386-412 threads the bilayer; the sequence is VTRFVLPVGATINMDGTALYEALAAIF. Na(+)-binding residues include G394, T396, and N398. T402 lines the L-aspartate pocket. Over 413–425 the chain is Extracellular; that stretch reads IAQVNNFELNFGQ. The segment at residues 426–459 is an intramembrane region (discontinuously helical); sequence IITISITATAASIGAAGIPQAGLVTMVIVLTSVG. Position 443–447 (443–447) interacts with L-aspartate; that stretch reads IPQAG. Residues 460–472 are Extracellular-facing; that stretch reads LPTDDITLIIAVD. The helical transmembrane segment at 473–494 threads the bilayer; sequence WFLDRLRTTTNVLGDSLGAGIV. D476 and N483 together coordinate L-aspartate. N483 and D487 together coordinate Na(+). The Cytoplasmic portion of the chain corresponds to 495–542; that stretch reads EHLSRHELKNRDVEMGNSVIEENEMKKPYQLIAQDNETEKPIDSETKM. The residue at position 512 (S512) is a Phosphoserine.

This sequence belongs to the dicarboxylate/amino acid:cation symporter (DAACS) (TC 2.A.23) family. SLC1A3 subfamily. Homotrimer. In terms of processing, glycosylated. Detected in brain. Detected at very much lower levels in heart, lung, placenta and skeletal muscle. Highly expressed in cerebellum, but also found in frontal cortex, hippocampus and basal ganglia.

Its subcellular location is the cell membrane. It carries out the reaction K(+)(in) + L-glutamate(out) + 3 Na(+)(out) + H(+)(out) = K(+)(out) + L-glutamate(in) + 3 Na(+)(in) + H(+)(in). It catalyses the reaction K(+)(in) + L-aspartate(out) + 3 Na(+)(out) + H(+)(out) = K(+)(out) + L-aspartate(in) + 3 Na(+)(in) + H(+)(in). The catalysed reaction is D-aspartate(out) + K(+)(in) + 3 Na(+)(out) + H(+)(out) = D-aspartate(in) + K(+)(out) + 3 Na(+)(in) + H(+)(in). In terms of biological role, sodium-dependent, high-affinity amino acid transporter that mediates the uptake of L-glutamate and also L-aspartate and D-aspartate. Functions as a symporter that transports one amino acid molecule together with two or three Na(+) ions and one proton, in parallel with the counter-transport of one K(+) ion. Mediates Cl(-) flux that is not coupled to amino acid transport; this avoids the accumulation of negative charges due to aspartate and Na(+) symport. Plays a redundant role in the rapid removal of released glutamate from the synaptic cleft, which is essential for terminating the postsynaptic action of glutamate. The sequence is that of Excitatory amino acid transporter 1 from Homo sapiens (Human).